We begin with the raw amino-acid sequence, 496 residues long: UDP-N-acetylmuramoyl-L-alanyl-D-glutamate--2,6-diaminopimelate ligase (496 aa).

Residues leucine 29 and serine 31 each coordinate UDP-N-acetyl-alpha-D-muramoyl-L-alanyl-D-glutamate. Glycine 118–threonine 124 contributes to the ATP binding site. Residues asparagine 159, threonine 160–threonine 161, serine 187, glutamine 193, and arginine 195 each bind UDP-N-acetyl-alpha-D-muramoyl-L-alanyl-D-glutamate. Lysine 227 bears the N6-carboxylysine mark. Meso-2,6-diaminopimelate contacts are provided by residues arginine 392, aspartate 416 to arginine 419, glycine 467, and glutamate 471. Positions aspartate 416–arginine 419 match the Meso-diaminopimelate recognition motif motif.

This sequence belongs to the MurCDEF family. MurE subfamily. The cofactor is Mg(2+). In terms of processing, carboxylation is probably crucial for Mg(2+) binding and, consequently, for the gamma-phosphate positioning of ATP.

The protein resides in the cytoplasm. The catalysed reaction is UDP-N-acetyl-alpha-D-muramoyl-L-alanyl-D-glutamate + meso-2,6-diaminopimelate + ATP = UDP-N-acetyl-alpha-D-muramoyl-L-alanyl-gamma-D-glutamyl-meso-2,6-diaminopimelate + ADP + phosphate + H(+). The protein operates within cell wall biogenesis; peptidoglycan biosynthesis. Its function is as follows. Catalyzes the addition of meso-diaminopimelic acid to the nucleotide precursor UDP-N-acetylmuramoyl-L-alanyl-D-glutamate (UMAG) in the biosynthesis of bacterial cell-wall peptidoglycan. The sequence is that of UDP-N-acetylmuramoyl-L-alanyl-D-glutamate--2,6-diaminopimelate ligase from Wigglesworthia glossinidia brevipalpis.